A 498-amino-acid polypeptide reads, in one-letter code: Guanosine-5'-triphosphate,3'-diphosphate pyrophosphatase (498 aa).

This sequence belongs to the GppA/Ppx family. GppA subfamily.

The enzyme catalyses guanosine 3'-diphosphate 5'-triphosphate + H2O = guanosine 3',5'-bis(diphosphate) + phosphate + H(+). Its pathway is purine metabolism; ppGpp biosynthesis; ppGpp from GTP: step 2/2. Functionally, catalyzes the conversion of pppGpp to ppGpp. Guanosine pentaphosphate (pppGpp) is a cytoplasmic signaling molecule which together with ppGpp controls the 'stringent response', an adaptive process that allows bacteria to respond to amino acid starvation, resulting in the coordinated regulation of numerous cellular activities. The polypeptide is Guanosine-5'-triphosphate,3'-diphosphate pyrophosphatase (Yersinia enterocolitica serotype O:8 / biotype 1B (strain NCTC 13174 / 8081)).